We begin with the raw amino-acid sequence, 258 residues long: tRNA (guanine-N(7)-)-methyltransferase (258 aa).

Positions 1–42 are disordered; it reads MPETPLMRDNGPVNHADQDAPAVPEEGQTKDSKGSRLHPRVT. 4 residues coordinate S-adenosyl-L-methionine: Glu90, Glu115, Asp142, and Asp165. The active site involves Asp165. Substrate contacts are provided by residues Lys169, Asp201, and 235–238; that span reads TKFE.

The protein belongs to the class I-like SAM-binding methyltransferase superfamily. TrmB family.

It catalyses the reaction guanosine(46) in tRNA + S-adenosyl-L-methionine = N(7)-methylguanosine(46) in tRNA + S-adenosyl-L-homocysteine. It participates in tRNA modification; N(7)-methylguanine-tRNA biosynthesis. Its function is as follows. Catalyzes the formation of N(7)-methylguanine at position 46 (m7G46) in tRNA. This is tRNA (guanine-N(7)-)-methyltransferase from Rhodococcus jostii (strain RHA1).